A 125-amino-acid polypeptide reads, in one-letter code: Testis-specific protein LINC02914 (125 aa).

Over residues 1–12 (MHRKEPGARLEA) the composition is skewed to basic and acidic residues. The segment at 1 to 45 (MHRKEPGARLEATRGAARPHKQGTKPMITRPSVSQLGEGKCPSSQ) is disordered.

In terms of tissue distribution, expressed in testes and ejaculated spermatozoa (at protein level).

The protein localises to the cytoplasm. It localises to the nucleus. The protein resides in the cell projection. Its subcellular location is the cilium. It is found in the flagellum. Functionally, may play a role in the flagellum biology. The protein is Testis-specific protein LINC02914 of Homo sapiens (Human).